Consider the following 295-residue polypeptide: Phosphatidylserine decarboxylase proenzyme (295 aa).

Active-site charge relay system; for autoendoproteolytic cleavage activity residues include aspartate 113, histidine 169, and serine 256. The Schiff-base intermediate with substrate; via pyruvic acid; for decarboxylase activity role is filled by serine 256. Serine 256 is subject to Pyruvic acid (Ser); by autocatalysis.

Belongs to the phosphatidylserine decarboxylase family. PSD-B subfamily. Prokaryotic type II sub-subfamily. In terms of assembly, heterodimer of a large membrane-associated beta subunit and a small pyruvoyl-containing alpha subunit. It depends on pyruvate as a cofactor. In terms of processing, is synthesized initially as an inactive proenzyme. Formation of the active enzyme involves a self-maturation process in which the active site pyruvoyl group is generated from an internal serine residue via an autocatalytic post-translational modification. Two non-identical subunits are generated from the proenzyme in this reaction, and the pyruvate is formed at the N-terminus of the alpha chain, which is derived from the carboxyl end of the proenzyme. The autoendoproteolytic cleavage occurs by a canonical serine protease mechanism, in which the side chain hydroxyl group of the serine supplies its oxygen atom to form the C-terminus of the beta chain, while the remainder of the serine residue undergoes an oxidative deamination to produce ammonia and the pyruvoyl prosthetic group on the alpha chain. During this reaction, the Ser that is part of the protease active site of the proenzyme becomes the pyruvoyl prosthetic group, which constitutes an essential element of the active site of the mature decarboxylase.

The protein localises to the cell membrane. It catalyses the reaction a 1,2-diacyl-sn-glycero-3-phospho-L-serine + H(+) = a 1,2-diacyl-sn-glycero-3-phosphoethanolamine + CO2. It participates in phospholipid metabolism; phosphatidylethanolamine biosynthesis; phosphatidylethanolamine from CDP-diacylglycerol: step 2/2. Its function is as follows. Catalyzes the formation of phosphatidylethanolamine (PtdEtn) from phosphatidylserine (PtdSer). In Clostridium botulinum (strain Langeland / NCTC 10281 / Type F), this protein is Phosphatidylserine decarboxylase proenzyme.